The following is a 270-amino-acid chain: 5'-AMP-activated protein kinase subunit beta-1 (270 aa).

The interval 1–44 (MGNTSSERAALDRQGGHKTPRRDSSGGSKDGDRPKILMDSPEDA) is disordered. A lipid anchor (N-myristoyl glycine) is attached at Gly-2. Position 4 is a phosphothreonine (Thr-4). Residues Ser-5 and Ser-6 each carry the phosphoserine modification. Over residues 9 to 36 (AALDRQGGHKTPRRDSSGGSKDGDRPKI) the composition is skewed to basic and acidic residues. The residue at position 19 (Thr-19) is a Phosphothreonine. Residues Ser-24 and Ser-25 each carry the phosphoserine; by autocatalysis modification. Ser-40, Ser-96, and Ser-101 each carry phosphoserine. A glycogen-binding domain region spans residues 68-163 (EVNDKAPAQA…QVKKTDFEVF (96 aa)). Residue Ser-108 is modified to Phosphoserine; by autocatalysis. At Thr-148 the chain carries Phosphothreonine. Ser-182 is modified (phosphoserine). An N6-succinyllysine modification is found at Lys-201.

It belongs to the 5'-AMP-activated protein kinase beta subunit family. AMPK is a heterotrimer of an alpha catalytic subunit (PRKAA1 or PRKAA2), a beta (PRKAB1 or PRKAB2) and a gamma non-catalytic subunits (PRKAG1, PRKAG2 or PRKAG3). Interacts with FNIP1 and FNIP2. In terms of processing, phosphorylated when associated with the catalytic subunit (PRKAA1 or PRKAA2). Phosphorylated by ULK1; leading to negatively regulate AMPK activity and suggesting the existence of a regulatory feedback loop between ULK1 and AMPK.

In terms of biological role, non-catalytic subunit of AMP-activated protein kinase (AMPK), an energy sensor protein kinase that plays a key role in regulating cellular energy metabolism. In response to reduction of intracellular ATP levels, AMPK activates energy-producing pathways and inhibits energy-consuming processes: inhibits protein, carbohydrate and lipid biosynthesis, as well as cell growth and proliferation. AMPK acts via direct phosphorylation of metabolic enzymes, and by longer-term effects via phosphorylation of transcription regulators. Also acts as a regulator of cellular polarity by remodeling the actin cytoskeleton; probably by indirectly activating myosin. Beta non-catalytic subunit acts as a scaffold on which the AMPK complex assembles, via its C-terminus that bridges alpha (PRKAA1 or PRKAA2) and gamma subunits (PRKAG1, PRKAG2 or PRKAG3). This Bos taurus (Bovine) protein is 5'-AMP-activated protein kinase subunit beta-1 (PRKAB1).